Here is a 511-residue protein sequence, read N- to C-terminus: Sodium/proline symporter 2 (511 aa).

13 helical membrane passes run 16–36 (WQTY…GYYG), 54–74 (IGPY…WMIM), 85–105 (LSAM…YFVV), 139–159 (IISG…GFVS), 175–195 (GLLM…YLAV), 204–224 (VIML…LNGI), 246–266 (VLGI…PHII), 286–306 (ISWM…GIAF), 327–347 (ILFH…AIMS), 381–401 (FLMV…WIAW), 410–430 (LVGN…IFSL), 438–458 (TGAL…IVWI), and 467–487 (LFGM…TYFV).

The protein belongs to the sodium:solute symporter (SSF) (TC 2.A.21) family.

It is found in the cell membrane. The catalysed reaction is L-proline(in) + Na(+)(in) = L-proline(out) + Na(+)(out). Functionally, catalyzes the sodium-dependent uptake of extracellular L-proline. This is Sodium/proline symporter 2 (putP2) from Staphylococcus saprophyticus subsp. saprophyticus (strain ATCC 15305 / DSM 20229 / NCIMB 8711 / NCTC 7292 / S-41).